The primary structure comprises 205 residues: Dr1-associated corepressor (205 aa).

In terms of domain architecture, Histone-fold spans 14-77; it reads PARIKKIMQT…SHLKQCIELE (64 aa). Positions 91–205 are disordered; sequence PDMQGDGEDN…DEEDEEDYDS (115 aa). A compositionally biased stretch (basic and acidic residues) spans 98–108; the sequence is EDNHMDGDKGA. Residues 114–125 are compositionally biased toward gly residues; it reads PGSGGRKNGGMG. Acidic residues predominate over residues 138–155; sequence SEQEDESEDTDTDGEEET. Over residues 184–193 the composition is skewed to pro residues; it reads PLPPAPPGPS. Positions 195–205 are enriched in acidic residues; sequence PDEEDEEDYDS.

The protein belongs to the NC2 alpha/DRAP1 family. Heterodimer with DR1. Binds BTAF1. Phosphorylation reduces DNA binding, but has no effect on heterodimerization and TBP binding. As to expression, ubiquitous. Highly expressed in adult testis, heart, skeletal muscle, pancreas and brain, and in fetal brain, liver and kidney.

The protein localises to the nucleus. In terms of biological role, the association of the DR1/DRAP1 heterodimer with TBP results in a functional repression of both activated and basal transcription of class II genes. This interaction precludes the formation of a transcription-competent complex by inhibiting the association of TFIIA and/or TFIIB with TBP. Can bind to DNA on its own. The polypeptide is Dr1-associated corepressor (DRAP1) (Homo sapiens (Human)).